The sequence spans 240 residues: Tubulin alpha chain (240 aa).

Asn17 contacts GTP. The active site involves Glu43.

This sequence belongs to the tubulin family. As to quaternary structure, dimer of alpha and beta chains. A typical microtubule is a hollow water-filled tube with an outer diameter of 25 nm and an inner diameter of 15 nM. Alpha-beta heterodimers associate head-to-tail to form protofilaments running lengthwise along the microtubule wall with the beta-tubulin subunit facing the microtubule plus end conferring a structural polarity. Microtubules usually have 13 protofilaments but different protofilament numbers can be found in some organisms and specialized cells. Mg(2+) is required as a cofactor. In terms of processing, undergoes a tyrosination/detyrosination cycle, the cyclic removal and re-addition of a C-terminal tyrosine residue by the enzymes tubulin tyrosine carboxypeptidase (TTCP) and tubulin tyrosine ligase (TTL), respectively.

The protein localises to the cytoplasm. Its subcellular location is the cytoskeleton. The catalysed reaction is GTP + H2O = GDP + phosphate + H(+). Functionally, tubulin is the major constituent of microtubules, a cylinder consisting of laterally associated linear protofilaments composed of alpha- and beta-tubulin heterodimers. Microtubules grow by the addition of GTP-tubulin dimers to the microtubule end, where a stabilizing cap forms. Below the cap, tubulin dimers are in GDP-bound state, owing to GTPase activity of alpha-tubulin. This chain is Tubulin alpha chain, found in Octopus vulgaris (Common octopus).